The primary structure comprises 366 residues: MTVNPMAPRILIMAGGTGGHVFPALAVAKNLAEKGWQVRWLGTADRMEARLVPQHGFDIDFIDIQGVRGNGLLRTLAAPFKIMRSIMQAREVIAEFKPQVILGMGGFASGPGGVAGRLAGIPLVLHEQNAIPGMTNKLLARIATKVLCAFPNTFALAGQSVQVVGNPVREELALLGSMKQQGQHDALKVLVVGGSLGAKVLNEVMPNVVAQLSRSLSITVWHQVGKNNLASTKACYQQMGQAVNVNVAEFIDDMEAAYRWADVVVCRSGALTVSELAAVGLPSILVPYPHAVDDHQTVNAAILVDAGAGFLLPQAILTSDNLAEKLSLFANNPEVLVQMGKQAREVAVLDATNKVAEICAELARKS.

Residues 17-19 (TGG), asparagine 129, arginine 169, serine 195, isoleucine 251, 270-275 (ALTVSE), and glutamine 296 contribute to the UDP-N-acetyl-alpha-D-glucosamine site.

The protein belongs to the glycosyltransferase 28 family. MurG subfamily.

Its subcellular location is the cell inner membrane. The catalysed reaction is di-trans,octa-cis-undecaprenyl diphospho-N-acetyl-alpha-D-muramoyl-L-alanyl-D-glutamyl-meso-2,6-diaminopimeloyl-D-alanyl-D-alanine + UDP-N-acetyl-alpha-D-glucosamine = di-trans,octa-cis-undecaprenyl diphospho-[N-acetyl-alpha-D-glucosaminyl-(1-&gt;4)]-N-acetyl-alpha-D-muramoyl-L-alanyl-D-glutamyl-meso-2,6-diaminopimeloyl-D-alanyl-D-alanine + UDP + H(+). The protein operates within cell wall biogenesis; peptidoglycan biosynthesis. Cell wall formation. Catalyzes the transfer of a GlcNAc subunit on undecaprenyl-pyrophosphoryl-MurNAc-pentapeptide (lipid intermediate I) to form undecaprenyl-pyrophosphoryl-MurNAc-(pentapeptide)GlcNAc (lipid intermediate II). This Shewanella denitrificans (strain OS217 / ATCC BAA-1090 / DSM 15013) protein is UDP-N-acetylglucosamine--N-acetylmuramyl-(pentapeptide) pyrophosphoryl-undecaprenol N-acetylglucosamine transferase.